The chain runs to 228 residues: Early nodulin-like protein 18 (228 aa).

The signal sequence occupies residues 1 to 26 (MSPSCSSCVNVLLIMCLMLLSLSADA). The region spanning 28–148 (KNYTVGESTG…GQHFMINVTH (121 aa)) is the Phytocyanin domain. N-linked (GlcNAc...) asparagine glycosylation is found at Asn29, Asn71, Asn94, and Asn145. Residues Cys86 and Cys136 are joined by a disulfide bond. The disordered stretch occupies residues 148–211 (HGQGLPDSSS…VHSKKSSSST (64 aa)). The span at 153–170 (PDSSSPDDAAAPGPSESS) shows a compositional bias: low complexity. Positions 188 to 204 (DHPKDIESADDDKEVHS) are enriched in basic and acidic residues. The GPI-anchor amidated serine moiety is linked to residue Ser204. The propeptide at 205-228 (KKSSSSTTKTSLFCFVFMGLFASF) is removed in mature form.

Belongs to the early nodulin-like (ENODL) family. In terms of tissue distribution, mostly expressed in seedlings, roots and flowers, and, to a lower extent, in leaves, stems and seeds.

The protein resides in the cell membrane. May act as a carbohydrate transporter. The polypeptide is Early nodulin-like protein 18 (Arabidopsis thaliana (Mouse-ear cress)).